We begin with the raw amino-acid sequence, 475 residues long: Sulfate adenylyltransferase subunit 1 (475 aa).

The tr-type G domain maps to 25–239; that stretch reads KSLLRFLTCG…EVLETVEIQR (215 aa). A G1 region spans residues 34-41; that stretch reads GSVDDGKS. GTP is bound at residue 34–41; that stretch reads GSVDDGKS. Residues 92 to 96 are G2; that stretch reads GITID. A G3 region spans residues 113–116; that stretch reads DTPG. Residues 113–117 and 168–171 each bind GTP; these read DTPGH and NKMD. A G4 region spans residues 168–171; that stretch reads NKMD. Residues 206 to 208 are G5; sequence SAL.

The protein belongs to the TRAFAC class translation factor GTPase superfamily. Classic translation factor GTPase family. CysN/NodQ subfamily. As to quaternary structure, heterodimer composed of CysD, the smaller subunit, and CysN.

The enzyme catalyses sulfate + ATP + H(+) = adenosine 5'-phosphosulfate + diphosphate. It participates in sulfur metabolism; hydrogen sulfide biosynthesis; sulfite from sulfate: step 1/3. In terms of biological role, with CysD forms the ATP sulfurylase (ATPS) that catalyzes the adenylation of sulfate producing adenosine 5'-phosphosulfate (APS) and diphosphate, the first enzymatic step in sulfur assimilation pathway. APS synthesis involves the formation of a high-energy phosphoric-sulfuric acid anhydride bond driven by GTP hydrolysis by CysN coupled to ATP hydrolysis by CysD. The chain is Sulfate adenylyltransferase subunit 1 from Escherichia coli O127:H6 (strain E2348/69 / EPEC).